The sequence spans 198 residues: Probable nicotinate-nucleotide adenylyltransferase (198 aa).

The protein belongs to the NadD family.

The enzyme catalyses nicotinate beta-D-ribonucleotide + ATP + H(+) = deamido-NAD(+) + diphosphate. It functions in the pathway cofactor biosynthesis; NAD(+) biosynthesis; deamido-NAD(+) from nicotinate D-ribonucleotide: step 1/1. In terms of biological role, catalyzes the reversible adenylation of nicotinate mononucleotide (NaMN) to nicotinic acid adenine dinucleotide (NaAD). The protein is Probable nicotinate-nucleotide adenylyltransferase of Albidiferax ferrireducens (strain ATCC BAA-621 / DSM 15236 / T118) (Rhodoferax ferrireducens).